A 240-amino-acid polypeptide reads, in one-letter code: Ribonuclease PH (240 aa).

Phosphate contacts are provided by residues R87 and 125–127 (GTR).

The protein belongs to the RNase PH family. Homohexameric ring arranged as a trimer of dimers.

It carries out the reaction tRNA(n+1) + phosphate = tRNA(n) + a ribonucleoside 5'-diphosphate. Phosphorolytic 3'-5' exoribonuclease that plays an important role in tRNA 3'-end maturation. Removes nucleotide residues following the 3'-CCA terminus of tRNAs; can also add nucleotides to the ends of RNA molecules by using nucleoside diphosphates as substrates, but this may not be physiologically important. Probably plays a role in initiation of 16S rRNA degradation (leading to ribosome degradation) during starvation. In Pseudomonas syringae pv. tomato (strain ATCC BAA-871 / DC3000), this protein is Ribonuclease PH.